A 111-amino-acid polypeptide reads, in one-letter code: Disintegrin piscivostatin-alpha (111 aa).

The N-terminal stretch at 1–20 is a signal peptide; the sequence is MIQVLLVTICLAVFPYQGSS. Positions 21-44 are excised as a propeptide; it reads IILESGNVNDYEVVYPRKITPLPK. The Disintegrin domain maps to 45-111; the sequence is GAVQPKNPCC…GDCPRKHFYA (67 aa). 4 disulfides stabilise this stretch: Cys53-Cys76, Cys67-Cys73, Cys72-Cys97, and Cys85-Cys104. A Cell attachment site motif is present at residues 89–91; sequence RGD. Positions 110–111 are excised as a propeptide; the sequence is YA.

Belongs to the disintegrin family. Dimeric disintegrin subfamily. Heterodimer with piscivostatin-beta; disulfide-linked. As to expression, expressed by the venom gland.

It is found in the secreted. In terms of biological role, inhibits fibrinogen interaction with platelets. Acts by binding to alpha-IIb/beta-3 (ITGA2B/ITGB3) on the platelet surface and inhibits both ADP-induced platelet aggregation and platelet aggregate dissociation in human platelet-rich plasma. This Agkistrodon piscivorus piscivorus (Eastern cottonmouth) protein is Disintegrin piscivostatin-alpha.